A 317-amino-acid chain; its full sequence is Insulin-like growth factor-binding protein 2 (317 aa).

A signal peptide spans Met-1–Ala-33. In terms of domain architecture, IGFBP N-terminal spans Val-35–His-126. Cystine bridges form between Cys-39-Cys-76, Cys-42-Cys-78, Cys-50-Cys-79, Cys-68-Cys-82, Cys-90-Cys-103, and Cys-97-Cys-123. Disordered stretches follow at residues Lys-125–Val-151 and Glu-189–Pro-218. In terms of domain architecture, Thyroglobulin type-1 spans Arg-216–Cys-298. Disulfide bonds link Cys-219–Cys-253, Cys-264–Cys-275, and Cys-277–Cys-298. The Cell attachment site motif lies at Arg-293–Asp-295.

As to quaternary structure, interacts with IGF1. Interacts with IGF2. Interacts (via RGD motif) with integrin alpha5/ITGA5; this interaction induces cell migration, adhesion or apoptosis according to the context. Interacts with PTPRB; this interaction leads to PTPRB dimerization and inactivation. Cleaved by MMP9 leading to release of free IGF2 from IGFBP2-IGF2 complex, which contributes to enhance the motility and the growth of astrocytes. In terms of processing, O-glycosylated. In terms of tissue distribution, expressed in abundance in selected adult tissues, namely liver, kidney, adrenal, pituitary and choroid plexus.

It is found in the secreted. In terms of biological role, multifunctional protein that plays a critical role in regulating the availability of IGFs such as IGF1 and IGF2 to their receptors and thereby regulates IGF-mediated cellular processes including proliferation, differentiation, and apoptosis in a cell-type specific manner. Functions coordinately with receptor protein tyrosine phosphatase beta/PTPRB and the IGF1 receptor to regulate IGF1-mediated signaling by stimulating the phosphorylation of PTEN leading to its inactivation and AKT1 activation. Plays a positive role in cell migration via interaction with integrin alpha5/ITGA5 through an RGD motif. Additionally, interaction with ITGA5/ITGB1 enhances the adhesion of endothelial progenitor cells to endothelial cells. Upon mitochondrial damage, facilitates apoptosis with ITGA5 of podocytes, and then activates the phosphorylation of focal adhesion kinase (FAK)-mediated mitochondrial injury. This Ovis aries (Sheep) protein is Insulin-like growth factor-binding protein 2 (IGFBP2).